Reading from the N-terminus, the 331-residue chain is Lipoyl synthase (331 aa).

Residues Cys60, Cys65, Cys71, Cys86, Cys90, Cys93, and Ser301 each coordinate [4Fe-4S] cluster. In terms of domain architecture, Radical SAM core spans 72–290; it reads WSRGTATFML…REEGMQLGFL (219 aa).

This sequence belongs to the radical SAM superfamily. Lipoyl synthase family. [4Fe-4S] cluster serves as cofactor.

The protein resides in the cytoplasm. The catalysed reaction is [[Fe-S] cluster scaffold protein carrying a second [4Fe-4S](2+) cluster] + N(6)-octanoyl-L-lysyl-[protein] + 2 oxidized [2Fe-2S]-[ferredoxin] + 2 S-adenosyl-L-methionine + 4 H(+) = [[Fe-S] cluster scaffold protein] + N(6)-[(R)-dihydrolipoyl]-L-lysyl-[protein] + 4 Fe(3+) + 2 hydrogen sulfide + 2 5'-deoxyadenosine + 2 L-methionine + 2 reduced [2Fe-2S]-[ferredoxin]. The protein operates within protein modification; protein lipoylation via endogenous pathway; protein N(6)-(lipoyl)lysine from octanoyl-[acyl-carrier-protein]: step 2/2. Functionally, catalyzes the radical-mediated insertion of two sulfur atoms into the C-6 and C-8 positions of the octanoyl moiety bound to the lipoyl domains of lipoate-dependent enzymes, thereby converting the octanoylated domains into lipoylated derivatives. The polypeptide is Lipoyl synthase (Deinococcus radiodurans (strain ATCC 13939 / DSM 20539 / JCM 16871 / CCUG 27074 / LMG 4051 / NBRC 15346 / NCIMB 9279 / VKM B-1422 / R1)).